A 354-amino-acid chain; its full sequence is Methylthioribose-1-phosphate isomerase (354 aa).

Catalysis depends on Asp-246, which acts as the Proton donor.

It belongs to the eIF-2B alpha/beta/delta subunits family. MtnA subfamily.

The protein resides in the cytoplasm. It localises to the nucleus. The catalysed reaction is 5-(methylsulfanyl)-alpha-D-ribose 1-phosphate = 5-(methylsulfanyl)-D-ribulose 1-phosphate. It participates in amino-acid biosynthesis; L-methionine biosynthesis via salvage pathway; L-methionine from S-methyl-5-thio-alpha-D-ribose 1-phosphate: step 1/6. In terms of biological role, catalyzes the interconversion of methylthioribose-1-phosphate (MTR-1-P) into methylthioribulose-1-phosphate (MTRu-1-P). The sequence is that of Methylthioribose-1-phosphate isomerase (mri1) from Xenopus tropicalis (Western clawed frog).